The following is a 159-amino-acid chain: Nutritionally-regulated adipose and cardiac-enriched protein homolog (159 aa).

The disordered stretch occupies residues 1–67; sequence MKTAVHALSP…GDEPRRTTRH (67 aa). Basic and acidic residues-rich tracts occupy residues 12–25 and 50–63; these read SRPE…KNEE and SPQE…EPRR. A helical membrane pass occupies residues 107–124; that stretch reads LTACILLALALGMCCGQA.

It localises to the cell membrane. The chain is Nutritionally-regulated adipose and cardiac-enriched protein homolog (NRAC) from Bos taurus (Bovine).